The primary structure comprises 422 residues: Target of rapamycin complex 2 subunit bit61 (422 aa).

The segment covering 48–69 has biased composition (polar residues); it reads VTTKESNVGDSDTTENIKSPFN. Residues 48–101 are disordered; sequence VTTKESNVGDSDTTENIKSPFNGQWPFSRRSSQSSSHPVFEETHWSKHSKRPGK. Phosphoserine occurs at positions 109, 132, and 201.

This sequence belongs to the BIT61 family. The target of rapamycin complex 2 (TORC2) is composed of at least bit61, pop3/wat1, sin1, ste20 and tor1. In terms of processing, either Thr-23, Thr-25 or Ser-26 and Ser-78 or Ser-79 are phosphorylated as well.

It localises to the cytoplasm. The protein localises to the nucleus. Its function is as follows. Component of TORC2, which regulates multiple cellular processes to control cell growth in response to environmental signals. TORC2 is required for cell survival under various stress conditions. TORC2 positively controls G1 cell-cycle arrest, sexual development and amino acid uptake. Positively regulates amino acid uptake through the control of expression of amino acid permeases. The protein is Target of rapamycin complex 2 subunit bit61 of Schizosaccharomyces pombe (strain 972 / ATCC 24843) (Fission yeast).